Consider the following 362-residue polypeptide: tRNA N6-adenosine threonylcarbamoyltransferase (362 aa).

Fe cation is bound by residues His116 and His120. Substrate-binding positions include 138 to 142 (LVSGG), Asp171, Gly184, and Asn284. Fe cation is bound at residue Asp312.

This sequence belongs to the KAE1 / TsaD family. The cofactor is Fe(2+).

It is found in the cytoplasm. The enzyme catalyses L-threonylcarbamoyladenylate + adenosine(37) in tRNA = N(6)-L-threonylcarbamoyladenosine(37) in tRNA + AMP + H(+). Functionally, required for the formation of a threonylcarbamoyl group on adenosine at position 37 (t(6)A37) in tRNAs that read codons beginning with adenine. Is involved in the transfer of the threonylcarbamoyl moiety of threonylcarbamoyl-AMP (TC-AMP) to the N6 group of A37, together with TsaE and TsaB. TsaD likely plays a direct catalytic role in this reaction. In Chelativorans sp. (strain BNC1), this protein is tRNA N6-adenosine threonylcarbamoyltransferase.